Reading from the N-terminus, the 780-residue chain is Ribonucleoside-diphosphate reductase large subunit (780 aa).

Residues Thr-177, 192-193, Gly-223, 393-397, and 595-599 contribute to the substrate site; these read SC, NLCAE, and PTVGS. Cys-193 and Cys-409 form a disulfide bridge. Asn-393 (proton acceptor) is an active-site residue. The Cysteine radical intermediate role is filled by Cys-395. Glu-397 serves as the catalytic Proton acceptor.

It belongs to the ribonucleoside diphosphate reductase large chain family. Heterotetramer composed of a homodimer of the large subunit (R1) and a homodimer of the small subunit (R2). Larger multisubunit protein complex are also active, composed of (R1)n(R2)n.

The catalysed reaction is a 2'-deoxyribonucleoside 5'-diphosphate + [thioredoxin]-disulfide + H2O = a ribonucleoside 5'-diphosphate + [thioredoxin]-dithiol. In terms of biological role, ribonucleoside-diphosphate reductase holoenzyme provides the precursors necessary for viral DNA synthesis. Allows virus growth in non-dividing cells, as well as reactivation from latency in infected hosts. Catalyzes the biosynthesis of deoxyribonucleotides from the corresponding ribonucleotides. This is Ribonucleoside-diphosphate reductase large subunit from Connochaetes taurinus (Blue wildebeest).